The following is a 229-amino-acid chain: Flagellar L-ring protein (229 aa).

Residues 1–25 (MKQVRLPSSATVRAACAVAVAALAG) form the signal peptide. Residue Cys-26 is the site of N-palmitoyl cysteine attachment. Cys-26 carries S-diacylglycerol cysteine lipidation.

This sequence belongs to the FlgH family. As to quaternary structure, the basal body constitutes a major portion of the flagellar organelle and consists of four rings (L,P,S, and M) mounted on a central rod.

It is found in the cell outer membrane. The protein resides in the bacterial flagellum basal body. Assembles around the rod to form the L-ring and probably protects the motor/basal body from shearing forces during rotation. The polypeptide is Flagellar L-ring protein (Burkholderia orbicola (strain AU 1054)).